The following is a 308-amino-acid chain: Protoheme IX farnesyltransferase 2 (308 aa).

The next 9 helical transmembrane spans lie at 20–40 (VTKPGIIMGNLIAVVGGFLLA), 47–67 (AVLMLATLVGLSLVVASGCAI), 92–114 (IPLKQVLGLGIALGVLGFGLLAW), 118–137 (LAALLFAAFGYLVYVGLYSL), 144–164 (VYGTLVGSLSGAVPPVVGYCA), 174–194 (LILLAMFSLWQMPHSYAIAIF), 218–238 (LHIVFYIALFALVSTLLPLAG), 240–260 (TGVGFMAVSCVTSFWWLLMAL), and 275–295 (QVFGFSILTIAILSLTMALDF).

This sequence belongs to the UbiA prenyltransferase family. Protoheme IX farnesyltransferase subfamily.

It is found in the cell inner membrane. The enzyme catalyses heme b + (2E,6E)-farnesyl diphosphate + H2O = Fe(II)-heme o + diphosphate. The protein operates within porphyrin-containing compound metabolism; heme O biosynthesis; heme O from protoheme: step 1/1. Its function is as follows. Converts heme B (protoheme IX) to heme O by substitution of the vinyl group on carbon 2 of heme B porphyrin ring with a hydroxyethyl farnesyl side group. This Shewanella loihica (strain ATCC BAA-1088 / PV-4) protein is Protoheme IX farnesyltransferase 2.